The following is a 280-amino-acid chain: Vitamin B12-binding protein (280 aa).

A signal peptide spans 1–27 (MMPLGLFPLPRAAVVLLISLLTLPAQA). The Fe/B12 periplasmic-binding domain maps to 30–277 (RVISLSPSTT…QMASIPTPVA (248 aa)). Y57 lines the cyanocob(III)alamin pocket. A disulfide bridge connects residues C190 and C266.

Belongs to the BtuF family. In terms of assembly, the complex is composed of two ATP-binding proteins (BtuD), two transmembrane proteins (BtuC) and a solute-binding protein (BtuF).

The protein resides in the periplasm. Part of the ABC transporter complex BtuCDF involved in vitamin B12 import. Binds vitamin B12 and delivers it to the periplasmic surface of BtuC. This is Vitamin B12-binding protein from Yersinia pseudotuberculosis serotype O:1b (strain IP 31758).